Reading from the N-terminus, the 398-residue chain is 8-amino-7-oxononanoate synthase (398 aa).

Arg-23 contacts substrate. 110–111 (GY) serves as a coordination point for pyridoxal 5'-phosphate. His-135 serves as a coordination point for substrate. Positions 181, 209, and 237 each coordinate pyridoxal 5'-phosphate. An N6-(pyridoxal phosphate)lysine modification is found at Lys-240. Thr-354 is a binding site for substrate.

This sequence belongs to the class-II pyridoxal-phosphate-dependent aminotransferase family. BioF subfamily. In terms of assembly, homodimer. It depends on pyridoxal 5'-phosphate as a cofactor.

It carries out the reaction 6-carboxyhexanoyl-[ACP] + L-alanine + H(+) = (8S)-8-amino-7-oxononanoate + holo-[ACP] + CO2. It participates in cofactor biosynthesis; biotin biosynthesis. Functionally, catalyzes the decarboxylative condensation of pimeloyl-[acyl-carrier protein] and L-alanine to produce 8-amino-7-oxononanoate (AON), [acyl-carrier protein], and carbon dioxide. This Anaeromyxobacter dehalogenans (strain 2CP-1 / ATCC BAA-258) protein is 8-amino-7-oxononanoate synthase.